The primary structure comprises 82 residues: Putative membrane protein insertion efficiency factor (82 aa).

This sequence belongs to the UPF0161 family.

It is found in the cell inner membrane. Its function is as follows. Could be involved in insertion of integral membrane proteins into the membrane. This Rickettsia massiliae (strain Mtu5) protein is Putative membrane protein insertion efficiency factor.